The following is a 283-amino-acid chain: Thymidylate synthase (283 aa).

Arginine 22 is a dUMP binding site. Catalysis depends on cysteine 160, which acts as the Nucleophile. DUMP contacts are provided by residues 180-183 (RSCD), asparagine 191, and 221-223 (HIY). Aspartate 183 is a (6R)-5,10-methylene-5,6,7,8-tetrahydrofolate binding site. A (6R)-5,10-methylene-5,6,7,8-tetrahydrofolate-binding site is contributed by serine 282.

It belongs to the thymidylate synthase family. Bacterial-type ThyA subfamily. In terms of assembly, homodimer.

It localises to the cytoplasm. It carries out the reaction dUMP + (6R)-5,10-methylene-5,6,7,8-tetrahydrofolate = 7,8-dihydrofolate + dTMP. It participates in pyrimidine metabolism; dTTP biosynthesis. In terms of biological role, catalyzes the reductive methylation of 2'-deoxyuridine-5'-monophosphate (dUMP) to 2'-deoxythymidine-5'-monophosphate (dTMP) while utilizing 5,10-methylenetetrahydrofolate (mTHF) as the methyl donor and reductant in the reaction, yielding dihydrofolate (DHF) as a by-product. This enzymatic reaction provides an intracellular de novo source of dTMP, an essential precursor for DNA biosynthesis. The sequence is that of Thymidylate synthase from Pasteurella multocida (strain Pm70).